Consider the following 151-residue polypeptide: UPF0735 ACT domain-containing protein SAUSA300_1599 (151 aa).

The ACT domain maps to 74 to 149; sequence TLILYVTDIV…YVSKVELISM (76 aa).

The protein belongs to the UPF0735 family.

This chain is UPF0735 ACT domain-containing protein SAUSA300_1599, found in Staphylococcus aureus (strain USA300).